The chain runs to 471 residues: dTDP-4-dehydro-6-deoxy-alpha-D-glucopyranose 2,3-dehydratase (471 aa).

DTDP-4-dehydro-6-deoxy-alpha-D-glucose contacts are provided by residues Trp67, 155–159, Ser193, Asn238, Trp288, Arg351, 367–369, 372–373, and 405–408; these read TRSNY, QCT, NY, and EGGR.

The protein belongs to the hexose 2,3-dehydratase family. In terms of assembly, homodimer.

It catalyses the reaction dTDP-4-dehydro-6-deoxy-alpha-D-glucose = dTDP-3,4-didehydro-2,6-dideoxy-alpha-D-glucose + H2O. It functions in the pathway antibiotic biosynthesis. In terms of biological role, involved in the biosynthesis of the 2,3,6-trideoxysugar L-epivancosamine, the terminal sugar added to the aglycone scaffold of chloroeremomycin, a member of the glycopeptide antibiotics vancomycin family. Catalyzes the removal of the hydroxyl group at position C-2 of the hexose ring of dTDP-4-dehydro-6-deoxy-alpha-D-glucopyranose, and the oxidation of the hydroxyl group at position C-3 to form a carbonyl functionality. The product of the reaction, dTDP-2,6-dideoxy-D-glycero-hex-2-enos-4-ulose, is a highly unstable diketosugar, which spontaneously forms dTDP-3,4-didehydro-2,6-dideoxy-alpha-D-glucose. The polypeptide is dTDP-4-dehydro-6-deoxy-alpha-D-glucopyranose 2,3-dehydratase (Amycolatopsis orientalis (Nocardia orientalis)).